The sequence spans 210 residues: Large ribosomal subunit protein uL4 (210 aa).

The span at 41 to 51 (QNNARQGNASA) shows a compositional bias: polar residues. The segment at 41–77 (QNNARQGNASAKTRAEVRGGGRKPWKQKGTGRARAGS) is disordered. Basic residues predominate over residues 60–71 (GGRKPWKQKGTG).

Belongs to the universal ribosomal protein uL4 family. Part of the 50S ribosomal subunit.

Functionally, one of the primary rRNA binding proteins, this protein initially binds near the 5'-end of the 23S rRNA. It is important during the early stages of 50S assembly. It makes multiple contacts with different domains of the 23S rRNA in the assembled 50S subunit and ribosome. Its function is as follows. Forms part of the polypeptide exit tunnel. The polypeptide is Large ribosomal subunit protein uL4 (Synechocystis sp. (strain ATCC 27184 / PCC 6803 / Kazusa)).